The chain runs to 254 residues: MTGTLYVVGTGPGSAKQMTPETAEAVAAAQEFYGYFPYLDRLNLRPDQIRVASDNREELDRAQVALTRAAAGVKVCMVSGGDPGVFAMAAAVCEAIDKGPAEWKSVELVITPGVTAMLAVAARIGAPLGHDFCAISLSDNLKPWEVITRRLRLAAEAGFVIALYNPISKARPWQLGEAFELLRSVLPASVPVIFGRAAGRPDERIAVMPLGEADANRADMATCVIIGSPETRIVERDGQPDLVYTPRFYAGASQ.

This sequence belongs to the precorrin methyltransferase family.

It carries out the reaction precorrin-3B + S-adenosyl-L-methionine = precorrin-4 + S-adenosyl-L-homocysteine + 3 H(+). The protein operates within cofactor biosynthesis; adenosylcobalamin biosynthesis; cob(II)yrinate a,c-diamide from precorrin-2 (aerobic route): step 3/10. Functionally, methyltransferase that catalyzes the methylation of C-17 in precorrin-3B to form precorrin-4. The protein is Precorrin-3B C(17)-methyltransferase (cobJ) of Sinorhizobium sp.